A 432-amino-acid chain; its full sequence is MDARWWAVVVLAAFPSLGAGGETPEAPPESWTQLWFFRFVVNAAGYASFMVPGYLLVQYFRRKNYLETGRGLCFPLVKACVFGNEPKASDEVPLAPRTEAAETTPMWQALKLLFCATGLQVSYLTWGVLQERVMTRSYGATATSPGERFTDSQFLVLMNRVLALIVAGLSCVLCKQPRHGAPMYRYSFASLSNVLSSWCQYEALKFVSFPTQVLAKASKVIPVMLMGKLVSRRSYEHWEYLTATLISIGVSMFLLSSGPEPRSSPATTLSGLILLAGYIAFDSFTSNWQDALFAYKMSSVQMMFGVNFFSCLFTVGSLLEQGALLEGTRFMGRHSEFAAHALLLSICSACGQLFIFYTIGQFGAAVFTIIMTLRQAFAILLSCLLYGHTVTVVGGLGVAVVFAALLLRVYARGRLKQRGKKAVPVESPVQKV.

Helical transmembrane passes span 5–25, 40–60, 109–129, 154–174, 238–258, 265–285, 299–319, 353–373, and 387–407; these read WWAV…ETPE, VVNA…VQYF, ALKL…WGVL, FLVL…CVLC, WEYL…LSSG, PATT…DSFT, SVQM…GSLL, LFIF…IMTL, and GHTV…ALLL. Position 427 is a phosphoserine (S427).

It belongs to the nucleotide-sugar transporter family. SLC35B subfamily. Highly expressed in the placenta, pancreas, mammary gland and skeletal muscle. Weakly or not expressed in colon, heart and prostate. Expressed in the brain, predominantly in frontal lobe gray matter, subcortical frontal white matter and cerebellum.

The protein localises to the golgi apparatus membrane. It carries out the reaction 3'-phosphoadenylyl sulfate(in) + adenosine 3',5'-bisphosphate(out) = 3'-phosphoadenylyl sulfate(out) + adenosine 3',5'-bisphosphate(in). Its function is as follows. Probably functions as a 3'-phosphoadenylyl sulfate:adenosine 3',5'-bisphosphate antiporter at the Golgi membranes. Mediates the transport from the cytosol into the lumen of the Golgi of 3'-phosphoadenylyl sulfate/adenosine 3'-phospho 5'-phosphosulfate (PAPS), a universal sulfuryl donor for sulfation events that take place in that compartment. This Homo sapiens (Human) protein is Adenosine 3'-phospho 5'-phosphosulfate transporter 1.